The sequence spans 456 residues: Histidine--tRNA ligase (456 aa).

The span at 1 to 11 (MTQNENPSAQS) shows a compositional bias: polar residues. The tract at residues 1–22 (MTQNENPSAQSGAKPEDKARPA) is disordered.

This sequence belongs to the class-II aminoacyl-tRNA synthetase family. Homodimer.

It localises to the cytoplasm. The enzyme catalyses tRNA(His) + L-histidine + ATP = L-histidyl-tRNA(His) + AMP + diphosphate + H(+). The sequence is that of Histidine--tRNA ligase from Cupriavidus pinatubonensis (strain JMP 134 / LMG 1197) (Cupriavidus necator (strain JMP 134)).